The primary structure comprises 454 residues: Bifunctional protein GlmU (454 aa).

The interval 1 to 228 (MTLPLHVVIL…PQDVEGANDP (228 aa)) is pyrophosphorylase. UDP-N-acetyl-alpha-D-glucosamine is bound by residues 10 to 13 (LAAG), K24, Q76, 81 to 82 (GT), 103 to 105 (YGD), G138, E153, N168, and N226. Mg(2+) is bound at residue D105. N226 lines the Mg(2+) pocket. Residues 229-249 (WQLAQLERAWQLRAARALCLQ) form a linker region. Residues 250–454 (GVRMADPARV…IEGWERPKKK (205 aa)) are N-acetyltransferase. Residues R332 and K350 each contribute to the UDP-N-acetyl-alpha-D-glucosamine site. H362 functions as the Proton acceptor in the catalytic mechanism. The UDP-N-acetyl-alpha-D-glucosamine site is built by Y365 and N376. Acetyl-CoA contacts are provided by residues A379, 385–386 (NY), S404, A422, and R439.

In the N-terminal section; belongs to the N-acetylglucosamine-1-phosphate uridyltransferase family. This sequence in the C-terminal section; belongs to the transferase hexapeptide repeat family. In terms of assembly, homotrimer. The cofactor is Mg(2+).

The protein localises to the cytoplasm. The catalysed reaction is alpha-D-glucosamine 1-phosphate + acetyl-CoA = N-acetyl-alpha-D-glucosamine 1-phosphate + CoA + H(+). The enzyme catalyses N-acetyl-alpha-D-glucosamine 1-phosphate + UTP + H(+) = UDP-N-acetyl-alpha-D-glucosamine + diphosphate. The protein operates within nucleotide-sugar biosynthesis; UDP-N-acetyl-alpha-D-glucosamine biosynthesis; N-acetyl-alpha-D-glucosamine 1-phosphate from alpha-D-glucosamine 6-phosphate (route II): step 2/2. It participates in nucleotide-sugar biosynthesis; UDP-N-acetyl-alpha-D-glucosamine biosynthesis; UDP-N-acetyl-alpha-D-glucosamine from N-acetyl-alpha-D-glucosamine 1-phosphate: step 1/1. It functions in the pathway bacterial outer membrane biogenesis; LPS lipid A biosynthesis. Functionally, catalyzes the last two sequential reactions in the de novo biosynthetic pathway for UDP-N-acetylglucosamine (UDP-GlcNAc). The C-terminal domain catalyzes the transfer of acetyl group from acetyl coenzyme A to glucosamine-1-phosphate (GlcN-1-P) to produce N-acetylglucosamine-1-phosphate (GlcNAc-1-P), which is converted into UDP-GlcNAc by the transfer of uridine 5-monophosphate (from uridine 5-triphosphate), a reaction catalyzed by the N-terminal domain. This chain is Bifunctional protein GlmU, found in Xanthomonas campestris pv. campestris (strain B100).